Consider the following 241-residue polypeptide: Ubiquinone biosynthesis O-methyltransferase (241 aa).

S-adenosyl-L-methionine contacts are provided by arginine 44, glycine 64, aspartate 85, and methionine 129.

It belongs to the methyltransferase superfamily. UbiG/COQ3 family.

The enzyme catalyses a 3-demethylubiquinol + S-adenosyl-L-methionine = a ubiquinol + S-adenosyl-L-homocysteine + H(+). It catalyses the reaction a 3-(all-trans-polyprenyl)benzene-1,2-diol + S-adenosyl-L-methionine = a 2-methoxy-6-(all-trans-polyprenyl)phenol + S-adenosyl-L-homocysteine + H(+). It participates in cofactor biosynthesis; ubiquinone biosynthesis. Functionally, O-methyltransferase that catalyzes the 2 O-methylation steps in the ubiquinone biosynthetic pathway. The polypeptide is Ubiquinone biosynthesis O-methyltransferase (Serratia proteamaculans (strain 568)).